The primary structure comprises 46 residues: KSCCPNTTGRNIYNTCRFGGGSREVCASLSGCKIISASTCPSYPDK.

Cystine bridges form between Cys-3–Cys-40, Cys-4–Cys-32, and Cys-16–Cys-26.

Belongs to the plant thionin (TC 1.C.44) family.

It is found in the secreted. In terms of biological role, thionins are small plant proteins which are toxic to animal cells. They seem to exert their toxic effect at the level of the cell membrane. Their precise function is not known. This chain is Viscotoxin-A2 (THI2.3), found in Viscum album (European mistletoe).